The sequence spans 556 residues: 2-isopropylmalate synthase (556 aa).

One can recognise a Pyruvate carboxyltransferase domain in the interval 33–307 (PIWCSSDLRD…NPELDFSDID (275 aa)). Asp-42, His-246, His-248, and Asn-282 together coordinate Mg(2+). Positions 439-556 (ANTPYALISH…SLSQAQAKAA (118 aa)) are regulatory domain.

This sequence belongs to the alpha-IPM synthase/homocitrate synthase family. LeuA type 2 subfamily. Homodimer. It depends on Mg(2+) as a cofactor.

It is found in the cytoplasm. The enzyme catalyses 3-methyl-2-oxobutanoate + acetyl-CoA + H2O = (2S)-2-isopropylmalate + CoA + H(+). It participates in amino-acid biosynthesis; L-leucine biosynthesis; L-leucine from 3-methyl-2-oxobutanoate: step 1/4. In terms of biological role, catalyzes the condensation of the acetyl group of acetyl-CoA with 3-methyl-2-oxobutanoate (2-ketoisovalerate) to form 3-carboxy-3-hydroxy-4-methylpentanoate (2-isopropylmalate). The polypeptide is 2-isopropylmalate synthase (Pseudomonas syringae pv. tomato (strain ATCC BAA-871 / DC3000)).